We begin with the raw amino-acid sequence, 131 residues long: Transcription antitermination protein NusB (131 aa).

The protein belongs to the NusB family.

Functionally, involved in transcription antitermination. Required for transcription of ribosomal RNA (rRNA) genes. Binds specifically to the boxA antiterminator sequence of the ribosomal RNA (rrn) operons. The chain is Transcription antitermination protein NusB from Aliarcobacter butzleri (strain RM4018) (Arcobacter butzleri).